We begin with the raw amino-acid sequence, 422 residues long: Synaptotagmin-15 (422 aa).

Topologically, residues 1 to 4 (MAEQ) are extracellular. A helical; Signal-anchor for type III membrane protein membrane pass occupies residues 5–27 (LALVIGCIIGGLLLLIGISCCLW). The Cytoplasmic portion of the chain corresponds to 28–422 (KRLCTTFTYE…WHALCRPMEP (395 aa)). 2 C2 domains span residues 148–267 (CLGR…VIWR) and 279–400 (EFGD…EHWN).

This sequence belongs to the synaptotagmin family. Homodimer.

It is found in the membrane. Functionally, may be involved in the trafficking and exocytosis of secretory vesicles in non-neuronal tissues. This Rattus norvegicus (Rat) protein is Synaptotagmin-15 (Syt15).